The primary structure comprises 100 residues: Urease subunit gamma (100 aa).

This sequence belongs to the urease gamma subunit family. Heterotrimer of UreA (gamma), UreB (beta) and UreC (alpha) subunits. Three heterotrimers associate to form the active enzyme.

It localises to the cytoplasm. It catalyses the reaction urea + 2 H2O + H(+) = hydrogencarbonate + 2 NH4(+). The protein operates within nitrogen metabolism; urea degradation; CO(2) and NH(3) from urea (urease route): step 1/1. The sequence is that of Urease subunit gamma from Pseudomonas fluorescens (strain ATCC BAA-477 / NRRL B-23932 / Pf-5).